Here is a 466-residue protein sequence, read N- to C-terminus: Asparagine--tRNA ligase (466 aa).

Belongs to the class-II aminoacyl-tRNA synthetase family. In terms of assembly, homodimer.

It is found in the cytoplasm. The enzyme catalyses tRNA(Asn) + L-asparagine + ATP = L-asparaginyl-tRNA(Asn) + AMP + diphosphate + H(+). In Myxococcus xanthus (strain DK1622), this protein is Asparagine--tRNA ligase.